Here is a 604-residue protein sequence, read N- to C-terminus: Elongation factor 4 (604 aa).

The region spanning 4-186 (EFIRNFSIIA…AIVHLVPPPK (183 aa)) is the tr-type G domain. GTP contacts are provided by residues 16-21 (DHGKST) and 133-136 (NKID).

This sequence belongs to the TRAFAC class translation factor GTPase superfamily. Classic translation factor GTPase family. LepA subfamily.

It localises to the cell inner membrane. The catalysed reaction is GTP + H2O = GDP + phosphate + H(+). Functionally, required for accurate and efficient protein synthesis under certain stress conditions. May act as a fidelity factor of the translation reaction, by catalyzing a one-codon backward translocation of tRNAs on improperly translocated ribosomes. Back-translocation proceeds from a post-translocation (POST) complex to a pre-translocation (PRE) complex, thus giving elongation factor G a second chance to translocate the tRNAs correctly. Binds to ribosomes in a GTP-dependent manner. This is Elongation factor 4 from Solibacter usitatus (strain Ellin6076).